The chain runs to 182 residues: Protein YIPF6 homolog (182 aa).

The Cytoplasmic portion of the chain corresponds to 1–45 (MIESENPNTLDEPVIQTILRDLKMIGFKLYHVILPRGNAANVLRD). The chain crosses the membrane as a helical span at residues 46–66 (WDLWGPLILCLVMAIFLSISA). Topologically, residues 67-70 (EEQK) are lumenal. The chain crosses the membrane as a helical span at residues 71–91 (ALEFTIVFVVVWCGAAIVTVN). Residues 92-104 (GQLLCGNISFFQS) are Cytoplasmic-facing. The chain crosses the membrane as a helical span at residues 105-125 (VCILGYCIFPLTIATIIIWII). Topologically, residues 126 to 133 (QNFTMIVK) are lumenal. Residues 134–154 (LPIVGGAWFWSSFASYGFLGS) traverse the membrane as a helical segment. The Cytoplasmic portion of the chain corresponds to 155–161 (SVPESRR). A helical membrane pass occupies residues 162 to 182 (LLAVYPVLLFYLVIAWLVVVQ).

The protein belongs to the YIP1 family.

The protein localises to the golgi apparatus membrane. The chain is Protein YIPF6 homolog (yipf6) from Dictyostelium discoideum (Social amoeba).